Consider the following 317-residue polypeptide: Epidermal growth factor-like protein (317 aa).

The N-terminal stretch at 1–23 (MDFKIFLFLTAIFMIVGVTVSTA) is a signal peptide. Residues 24 to 33 (TTNPTAPRAY) are may be required for E.coli agglutination activity. EGF-like domains are found at residues 93–128 (HCTPDCPSGCGLGNCTAPNVCTCNKGAGFGPDGKCI), 130–161 (VCPGRCLNGQCYGNFCNCNSGFVLEPNGRYCT), 163–195 (GCTRNCGPGGQCVGNNQCSCLSGFALNSQGTCQ), 208–243 (ACEPLCPKGCVNGECVAPGQCRCKSGYALNSSKVCA), 245–280 (KCSQPCYNGFCSAPNVCTCKEGYIKDATSRNGNRCI), and 282–315 (YCAAGCPNGTCSAPNFCICKQGYIKQSKGSNVCV). 18 cysteine pairs are disulfide-bonded: cysteine 98/cysteine 107, cysteine 102/cysteine 113, cysteine 115/cysteine 127, cysteine 131/cysteine 140, cysteine 135/cysteine 145, cysteine 147/cysteine 160, cysteine 164/cysteine 174, cysteine 168/cysteine 180, cysteine 182/cysteine 194, cysteine 213/cysteine 222, cysteine 217/cysteine 228, cysteine 230/cysteine 242, cysteine 246/cysteine 255, cysteine 250/cysteine 261, cysteine 263/cysteine 279, cysteine 283/cysteine 292, cysteine 287/cysteine 298, and cysteine 300/cysteine 314.

Its subcellular location is the secreted. In terms of biological role, binds to lipopolysaccharides (LPS) present on the cell walls of Gram-negative bacteria, behaving as a pattern recognition receptor (PRR). Induces bacterial aggregation and enhances their subsequent clearance by the innate immune response. Binds to the inner core oligosaccharides region of rough-type bacterial LPS. Displays activity against the Gram-negative bacterium E.coli. Does not display any activity against the Gram-positive bacterium S.aureus or the fungi C.albicans. The protein is Epidermal growth factor-like protein of Holotrichia diomphalia (Korean black chafer).